The primary structure comprises 413 residues: 2,3-bisphosphoglycerate-independent phosphoglycerate mutase (413 aa).

Belongs to the BPG-independent phosphoglycerate mutase family. A-PGAM subfamily.

The catalysed reaction is (2R)-2-phosphoglycerate = (2R)-3-phosphoglycerate. It functions in the pathway carbohydrate degradation; glycolysis; pyruvate from D-glyceraldehyde 3-phosphate: step 3/5. In terms of biological role, catalyzes the interconversion of 2-phosphoglycerate and 3-phosphoglycerate. In Metallosphaera sedula (strain ATCC 51363 / DSM 5348 / JCM 9185 / NBRC 15509 / TH2), this protein is 2,3-bisphosphoglycerate-independent phosphoglycerate mutase.